The primary structure comprises 179 residues: Large ribosomal subunit protein uL6 (179 aa).

This sequence belongs to the universal ribosomal protein uL6 family. In terms of assembly, part of the 50S ribosomal subunit.

Functionally, this protein binds to the 23S rRNA, and is important in its secondary structure. It is located near the subunit interface in the base of the L7/L12 stalk, and near the tRNA binding site of the peptidyltransferase center. This is Large ribosomal subunit protein uL6 from Geotalea uraniireducens (strain Rf4) (Geobacter uraniireducens).